Consider the following 430-residue polypeptide: Histidinol dehydrogenase (430 aa).

NAD(+) is bound by residues Y130, Q191, and N214. Substrate is bound by residues S237, Q259, and H262. Zn(2+)-binding residues include Q259 and H262. Catalysis depends on proton acceptor residues E327 and H328. The substrate site is built by H328, D361, E415, and H420. Position 361 (D361) interacts with Zn(2+). H420 provides a ligand contact to Zn(2+).

It belongs to the histidinol dehydrogenase family. It depends on Zn(2+) as a cofactor.

It carries out the reaction L-histidinol + 2 NAD(+) + H2O = L-histidine + 2 NADH + 3 H(+). Its pathway is amino-acid biosynthesis; L-histidine biosynthesis; L-histidine from 5-phospho-alpha-D-ribose 1-diphosphate: step 9/9. Functionally, catalyzes the sequential NAD-dependent oxidations of L-histidinol to L-histidinaldehyde and then to L-histidine. This is Histidinol dehydrogenase from Brucella suis biovar 1 (strain 1330).